Reading from the N-terminus, the 271-residue chain is MVISVVLLLLAACAVPAQGLGSFVHCEPCDEKALSMCPPSPLGCELVKEPGCGCCMTCALAEGQSCGVYTERCAQGLRCLPRQDEEKPLHALLHGRGVCLNEKSYGEQTKIERDSREHEEPTTSEMAEETYSPKVFRPKHTRISELKAEAVKKDRRKKLTQSKFVGGAENTAHPRVIPAPEMRQESDQGPCRRHMEASLQEFKASPRMVPRAVYLPNCDRKGFYKRKQCKPSRGRKRGICWCVDKYGMKLPGMEYVDGDFQCHAFDSSNVE.

A signal peptide spans 1-19; the sequence is MVISVVLLLLAACAVPAQG. In terms of domain architecture, IGFBP N-terminal spans 22–102; it reads SFVHCEPCDE…LHGRGVCLNE (81 aa). 6 disulfides stabilise this stretch: Cys-26-Cys-52, Cys-29-Cys-54, Cys-37-Cys-55, Cys-44-Cys-58, Cys-66-Cys-79, and Cys-73-Cys-99. The span at 109–121 shows a compositional bias: basic and acidic residues; sequence TKIERDSREHEEP. Positions 109-129 are disordered; it reads TKIERDSREHEEPTTSEMAEE. Position 115 is a phosphoserine (Ser-115). One can recognise a Thyroglobulin type-1 domain in the interval 188–262; that stretch reads QGPCRRHMEA…MEYVDGDFQC (75 aa). 3 disulfide bridges follow: Cys-191–Cys-218, Cys-229–Cys-240, and Cys-242–Cys-262.

Interacts with IGF1; this interaction enhances the growth stimulatory effects of IGF1 on fibroblasts. Interacts with CAV1; this interaction allows trafficking of IGFBP5 from the plasma membrane to the nucleus. Interacts with NCL; this interaction is necessary for IGFBP5 localization to the nucleus. As to expression, mostly in kidney.

It localises to the secreted. The protein resides in the cytoplasm. Its subcellular location is the nucleus. Functionally, multifunctional protein that plays a critical role in regulating the availability of IGFs to their receptors and thereby regulates IGF-mediated cellular processes including proliferation, differentiation, and apoptosis in a cell-type specific manner. Increases the cell proliferation of osteoblasts, intestinal smooth muscle cells and neuroblastoma cells. Enhances adhesion and survival of epithelial cells but decreases adhesion of mesenchymal cells. Once secreted, acts as a major mediator of mTORC1-dependent feedback inhibition of IGF1 signaling. Also plays a role in the induction of extracellular matrix (ECM) production and deposition independently of its nuclear translocation and binding to IGFs. Acts itself as a growth factor that can act independently of IGFs to regulate bone formation. Acts as a ligand for the ROR1 receptor which triggers formation of ROR1/HER2 heterodimer to enhance CREB oncogenic signaling. The chain is Insulin-like growth factor-binding protein 5 (Igfbp5) from Rattus norvegicus (Rat).